The primary structure comprises 263 residues: MSLERFVKIKYQTNEEKADKLVEGLKELGIECARIIEEKVDLQFDALRHLRENLNDDETFIKLVIANSIVSYQLSGKGEDWWWEFSKYFSQNPPEKSIVEACSKFLPSSRTNRRLVAGKIKRLEKLEPFLNSLTLQELRRYYFENMMGLRNDIAEALGSPKTAKTVVFAVKMFGYAGRIAFGEFVPYPMEIDIPEDVRIKAYTERITNEPPVSFWRRVAEETGIPPLHIDSILWPVLGGKREVMERLKKVCEKWELVLELGSL.

Residues Q43, S71, and W82 each contribute to the 8-oxoguanine site. The tract at residues 139–204 (RRYYFENMMG…EDVRIKAYTE (66 aa)) is helix-hairpin-helix. K164 acts as the Schiff-base intermediate with DNA in catalysis. 8-oxoguanine contacts are provided by F168 and P194. D196 is a catalytic residue. D230 and W234 together coordinate 8-oxoguanine.

The protein belongs to the archaeal N-glycosylase/DNA lyase (AGOG) family.

The enzyme catalyses 2'-deoxyribonucleotide-(2'-deoxyribose 5'-phosphate)-2'-deoxyribonucleotide-DNA = a 3'-end 2'-deoxyribonucleotide-(2,3-dehydro-2,3-deoxyribose 5'-phosphate)-DNA + a 5'-end 5'-phospho-2'-deoxyribonucleoside-DNA + H(+). Functionally, DNA repair enzyme that is part of the base excision repair (BER) pathway; protects from oxidative damage by removing the major product of DNA oxidation, 8-oxoguanine (GO), from single- and double-stranded DNA substrates. This Thermococcus kodakarensis (strain ATCC BAA-918 / JCM 12380 / KOD1) (Pyrococcus kodakaraensis (strain KOD1)) protein is N-glycosylase/DNA lyase.